A 265-amino-acid polypeptide reads, in one-letter code: ATP synthase subunit a (265 aa).

Helical transmembrane passes span 26–46 (VHLDTLFFSLVSGVLFLFFFY), 88–108 (IGSLALTIFCWVFVMNAIDLI), 132–152 (DISATLGMSVCVFALIIFYTI), 168–188 (PFNHWAFIPVNFLLEAVTLLA), 195–217 (FRLFGNMYAGELIFVLIAVMYMA), and 231–251 (LIWAIFHILVITLQAFIFMML).

Belongs to the ATPase A chain family. In terms of assembly, F-type ATPases have 2 components, CF(1) - the catalytic core - and CF(0) - the membrane proton channel. CF(1) has five subunits: alpha(3), beta(3), gamma(1), delta(1), epsilon(1). CF(0) has three main subunits: a(1), b(2) and c(9-12). The alpha and beta chains form an alternating ring which encloses part of the gamma chain. CF(1) is attached to CF(0) by a central stalk formed by the gamma and epsilon chains, while a peripheral stalk is formed by the delta and b chains.

It localises to the cell inner membrane. Functionally, key component of the proton channel; it plays a direct role in the translocation of protons across the membrane. The sequence is that of ATP synthase subunit a from Histophilus somni (strain 129Pt) (Haemophilus somnus).